The chain runs to 376 residues: Flagellar P-ring protein (376 aa).

The N-terminal stretch at 1 to 29 (MTQRPFSLLSHLGRICLAAAMLAALPAQA) is a signal peptide.

It belongs to the FlgI family. As to quaternary structure, the basal body constitutes a major portion of the flagellar organelle and consists of four rings (L,P,S, and M) mounted on a central rod.

The protein resides in the periplasm. The protein localises to the bacterial flagellum basal body. Functionally, assembles around the rod to form the L-ring and probably protects the motor/basal body from shearing forces during rotation. This is Flagellar P-ring protein from Bordetella avium (strain 197N).